We begin with the raw amino-acid sequence, 284 residues long: Bifunctional protein FolD (284 aa).

NADP(+)-binding positions include 166-168 and isoleucine 232; that span reads GAS.

This sequence belongs to the tetrahydrofolate dehydrogenase/cyclohydrolase family. Homodimer.

The enzyme catalyses (6R)-5,10-methylene-5,6,7,8-tetrahydrofolate + NADP(+) = (6R)-5,10-methenyltetrahydrofolate + NADPH. It carries out the reaction (6R)-5,10-methenyltetrahydrofolate + H2O = (6R)-10-formyltetrahydrofolate + H(+). It participates in one-carbon metabolism; tetrahydrofolate interconversion. Catalyzes the oxidation of 5,10-methylenetetrahydrofolate to 5,10-methenyltetrahydrofolate and then the hydrolysis of 5,10-methenyltetrahydrofolate to 10-formyltetrahydrofolate. This is Bifunctional protein FolD from Stutzerimonas stutzeri (strain A1501) (Pseudomonas stutzeri).